A 247-amino-acid polypeptide reads, in one-letter code: Putative 2-succinyl-6-hydroxy-2,4-cyclohexadiene-1-carboxylate synthase (247 aa).

Residues 4–229 enclose the AB hydrolase-1 domain; sequence IIFLHGLLGT…CAGHNSHLEN (226 aa).

It belongs to the AB hydrolase superfamily. MenH family. As to quaternary structure, monomer.

The enzyme catalyses 5-enolpyruvoyl-6-hydroxy-2-succinyl-cyclohex-3-ene-1-carboxylate = (1R,6R)-6-hydroxy-2-succinyl-cyclohexa-2,4-diene-1-carboxylate + pyruvate. Its pathway is quinol/quinone metabolism; 1,4-dihydroxy-2-naphthoate biosynthesis; 1,4-dihydroxy-2-naphthoate from chorismate: step 3/7. The protein operates within quinol/quinone metabolism; menaquinone biosynthesis. Functionally, catalyzes a proton abstraction reaction that results in 2,5-elimination of pyruvate from 2-succinyl-5-enolpyruvyl-6-hydroxy-3-cyclohexene-1-carboxylate (SEPHCHC) and the formation of 2-succinyl-6-hydroxy-2,4-cyclohexadiene-1-carboxylate (SHCHC). This is Putative 2-succinyl-6-hydroxy-2,4-cyclohexadiene-1-carboxylate synthase from Haemophilus influenzae (strain ATCC 51907 / DSM 11121 / KW20 / Rd).